A 352-amino-acid polypeptide reads, in one-letter code: Histidinol-phosphate aminotransferase (352 aa).

Residue K221 is modified to N6-(pyridoxal phosphate)lysine.

This sequence belongs to the class-II pyridoxal-phosphate-dependent aminotransferase family. Histidinol-phosphate aminotransferase subfamily. As to quaternary structure, homodimer. Requires pyridoxal 5'-phosphate as cofactor.

The enzyme catalyses L-histidinol phosphate + 2-oxoglutarate = 3-(imidazol-4-yl)-2-oxopropyl phosphate + L-glutamate. It functions in the pathway amino-acid biosynthesis; L-histidine biosynthesis; L-histidine from 5-phospho-alpha-D-ribose 1-diphosphate: step 7/9. In Staphylococcus aureus (strain bovine RF122 / ET3-1), this protein is Histidinol-phosphate aminotransferase.